A 397-amino-acid chain; its full sequence is tRNA(Met) cytidine acetate ligase (397 aa).

ATP contacts are provided by residues 7–20 (VTEY…HIYH), glycine 101, asparagine 152, and arginine 177.

Belongs to the TmcAL family.

The protein resides in the cytoplasm. It carries out the reaction cytidine(34) in elongator tRNA(Met) + acetate + ATP = N(4)-acetylcytidine(34) in elongator tRNA(Met) + AMP + diphosphate. Its function is as follows. Catalyzes the formation of N(4)-acetylcytidine (ac(4)C) at the wobble position of elongator tRNA(Met), using acetate and ATP as substrates. First activates an acetate ion to form acetyladenylate (Ac-AMP) and then transfers the acetyl group to tRNA to form ac(4)C34. This Leuconostoc citreum (strain KM20) protein is tRNA(Met) cytidine acetate ligase.